The sequence spans 315 residues: MSKPLRIVFAGTPDFAAQHLAALLSSEHEVIAVYTQPDRPAGRGKKLTASPVKTIALEHNIPVYQPENFKSDEAKQALADLNADIMVVVAYGLLLPQAVLDTPKLGCINVHGSILPRWRGAAPIQRSIWAGDAETGVTIMQMDIGLDTGDMLKIATLPIDASDTSATMYDKLAKLGPVALVECLADIAAGTAIAIKQDDERANYAKKLSKEEARINWQDDAEHIERCVRAFNPWPMSHFEVAENSIKVWQSRVEASSHDAPAGTILKADKSGIYIATGHGCLVLEQIQIPGKKAMPVQDVLNARAAWFEVGSVLS.

(6S)-5,6,7,8-tetrahydrofolate is bound at residue 113 to 116; that stretch reads SILP.

Belongs to the Fmt family.

The enzyme catalyses L-methionyl-tRNA(fMet) + (6R)-10-formyltetrahydrofolate = N-formyl-L-methionyl-tRNA(fMet) + (6S)-5,6,7,8-tetrahydrofolate + H(+). In terms of biological role, attaches a formyl group to the free amino group of methionyl-tRNA(fMet). The formyl group appears to play a dual role in the initiator identity of N-formylmethionyl-tRNA by promoting its recognition by IF2 and preventing the misappropriation of this tRNA by the elongation apparatus. The sequence is that of Methionyl-tRNA formyltransferase from Vibrio vulnificus (strain YJ016).